A 384-amino-acid polypeptide reads, in one-letter code: Gastrin-releasing peptide receptor (384 aa).

The Extracellular portion of the chain corresponds to 1-39 (MDPNNCSHLNLEVDPFLSCNNTFNQTLNPPKMDNWFHPG). Asparagine 5, asparagine 20, and asparagine 24 each carry an N-linked (GlcNAc...) asparagine glycan. A helical membrane pass occupies residues 40-63 (IIYVIPAVYGLIIVIGLIGNITLI). Topologically, residues 64-77 (KIFCTVKSMRNVPN) are cytoplasmic. Residues 78–97 (LFISSLALGDLLLLVTCAPV) form a helical membrane-spanning segment. Topologically, residues 98 to 115 (DASKYLADRWLFGRIGCK) are extracellular. Cysteine 114 and cysteine 197 form a disulfide bridge. Residues 116–137 (LIPFIQLTSVGVSVFTLTALSA) traverse the membrane as a helical segment. Residues 138 to 153 (DRYKAIVRPMDIQASH) lie on the Cytoplasmic side of the membrane. A helical transmembrane segment spans residues 154–175 (ALMKICLKAALIWIVSMLLAIP). At 176-209 (EAVFSDLHPFHVKDTNQTFISCAPYPHSNELHPK) the chain is on the extracellular side. The helical transmembrane segment at 210–235 (IHSMASFLVFYIIPLSIISVYYYFIA) threads the bilayer. Over 236-265 (RNLIQSAYNLPVEGNIHVKKQIESRKRLAK) the chain is Cytoplasmic. A helical transmembrane segment spans residues 266-286 (TVLVFVGLFAFCWLPNHVIYL). Residues 287–299 (YRSYHYSEVDTSM) are Extracellular-facing. Residues 300–326 (LHFITSICARLLAFTNSCVNPFALYLL) form a helical membrane-spanning segment. At 327 to 384 (SKSFRKQFNTQLLCCQPSLLNRSHSTGRSTTCMTSFKSTNPSATFSLINGNICHEGYV) the chain is on the cytoplasmic side. Cysteine 340 carries S-palmitoyl cysteine lipidation. Serine 351 bears the Phosphoserine mark.

It belongs to the G-protein coupled receptor 1 family. In terms of tissue distribution, expressed in the hippocampal CA1 region (at protein level).

It is found in the cell membrane. Its function is as follows. Receptor for gastrin-releasing peptide (GRP). Signals via association with G proteins that activate a phosphatidylinositol-calcium second messenger system, resulting in Akt phosphorylation. Contributes to the regulation of food intake. Contributes to the perception of prurient stimuli and transmission of itch signals in the spinal cord that promote scratching behavior, but does not play a role in the perception of pain. Contributes primarily to nonhistaminergic itch sensation. In one study, shown to act in the amygdala as part of an inhibitory network which inhibits memory specifically related to learned fear. In another study, shown to contribute to disinhibition of glutamatergic cells in the auditory cortex via signaling on vasoactive intestinal peptide-expressing cells which leads to enhanced auditory fear memories. Contributes to the induction of sighing through signaling in the pre-Botzinger complex, a cluster of several thousand neurons in the ventrolateral medulla responsible for inspiration during respiratory activity. This chain is Gastrin-releasing peptide receptor (Grpr), found in Rattus norvegicus (Rat).